We begin with the raw amino-acid sequence, 593 residues long: MKLQAVMETLLQRQQRARQELEARQQLPPDPPAAPPGRARAAPDEDREPESARMQRAQMAALAAMRAAAAGLGHPASPGGSEDGPPGSEEEDAAREGTPGSPGRGREGPGEEHFEDMASDEDMKPKWEEEEMEEDLGEDEEEEEEDYEDEEEEEDEEGLGPPGPASLGTTALFPRKAQPPQAFRGDGVPRVLGGQERPGPGPAHPGGAAHVAPQLQPPDHGDWTYEEQFKQLYELDGDPKRKEFLDDLFSFMQKRGTPVNRIPIMAKQVLDLFMLYVLVTEKGGLVEVINKKLWREITKGLNLPTSITSAAFTLRTQYMKYLYPYECEKRGLSNPNELQAAIDSNRREGRRQSFGGSLFAYSPGGAHGMLSSPKLPVSSLGLAASTNGSSITPAPKIKKEEDSAIPITVPGRLPVSLAGHPVVAAQAAAVQAAAAQAAVAAQAAALEQLREKLESAEPPEKKMALVADEQQRLMQRALQQNFLAMAAQLPMSIRINSQASESRQDSAVNLTGTNGSNSISMSVEINGIMYTGVLFAQPPAPTPTSAPNKGGGGGGGSSSNAGGRGGNTGTSGGQAGPAGLSTPSTSTSNNSLP.

The disordered stretch occupies residues 14–222 (QQRARQELEA…PQLQPPDHGD (209 aa)). A compositionally biased stretch (basic and acidic residues) spans 41–53 (AAPDEDREPESAR). The segment covering 54–87 (MQRAQMAALAAMRAAAAGLGHPASPGGSEDGPPG) has biased composition (low complexity). Phosphoserine is present on residues Ser77, Ser81, and Ser88. The residue at position 98 (Thr98) is a Phosphothreonine. A phosphoserine mark is found at Ser101 and Ser119. Positions 104-127 (RGREGPGEEHFEDMASDEDMKPKW) are enriched in basic and acidic residues. An acidic region spans residues 119 to 156 (SDEDMKPKWEEEEMEEDLGEDEEEEEEDYEDEEEEEDE). The span at 128–158 (EEEEMEEDLGEDEEEEEEDYEDEEEEEDEEG) shows a compositional bias: acidic residues. In terms of domain architecture, ARID spans 238–330 (DPKRKEFLDD…YLYPYECEKR (93 aa)). 2 positions are modified to phosphoserine: Ser353 and Ser362. Glycyl lysine isopeptide (Lys-Gly) (interchain with G-Cter in SUMO2) cross-links involve residues Lys398, Lys399, Lys452, and Lys462. The 98-residue stretch at 444–541 (AALEQLREKL…GVLFAQPPAP (98 aa)) folds into the REKLES domain. The tract at residues 445 to 488 (ALEQLREKLESAEPPEKKMALVADEQQRLMQRALQQNFLAMAAQ) is important for nuclear localization. A homodimerization region spans residues 490 to 513 (PMSIRINSQASESRQDSAVNLTGT). Disordered regions lie at residues 497–516 (SQAS…TNGS) and 539–593 (PAPT…NSLP). An important for cytoplasmic localization region spans residues 537 to 557 (QPPAPTPTSAPNKGGGGGGGS). Over residues 549–576 (KGGGGGGGSSSNAGGRGGNTGTSGGQAG) the composition is skewed to gly residues. Residues 580 to 593 (LSTPSTSTSNNSLP) show a composition bias toward low complexity.

As to quaternary structure, homodimer. Heterodimer with ARID3B. Interacts with E2F1. Interacts with GTF2I and BTK. As to expression, widely expressed, with highest expression in skeletal muscle, thalamus, and colon.

The protein localises to the nucleus. It localises to the cytoplasm. Functionally, transcription factor which may be involved in the control of cell cycle progression by the RB1/E2F1 pathway and in B-cell differentiation. The protein is AT-rich interactive domain-containing protein 3A (ARID3A) of Homo sapiens (Human).